A 289-amino-acid polypeptide reads, in one-letter code: Rhomboid-type serine protease 2 (289 aa).

The next 6 helical transmembrane spans lie at 26–46 (VVII…VDIQ), 67–87 (FPFI…LTPL), 100–120 (CLAL…IGLE), 122–142 (FVFG…LLLG), 157–179 (IGTY…AVLV), and 184–203 (FWGH…SSTL). Catalysis depends on Ser-134, which acts as the Nucleophile. The active site involves His-187.

Belongs to the peptidase S54 family.

It localises to the golgi apparatus membrane. The protein localises to the golgi apparatus. The protein resides in the cis-Golgi network membrane. The enzyme catalyses Cleaves type-1 transmembrane domains using a catalytic dyad composed of serine and histidine that are contributed by different transmembrane domains.. In terms of biological role, probable rhomboid-type serine protease that catalyzes intramembrane proteolysis. The chain is Rhomboid-type serine protease 2 (RBD2) from Podospora anserina (Pleurage anserina).